Reading from the N-terminus, the 119-residue chain is Large ribosomal subunit protein bL20 (119 aa).

It belongs to the bacterial ribosomal protein bL20 family.

Functionally, binds directly to 23S ribosomal RNA and is necessary for the in vitro assembly process of the 50S ribosomal subunit. It is not involved in the protein synthesizing functions of that subunit. The protein is Large ribosomal subunit protein bL20 of Ruthia magnifica subsp. Calyptogena magnifica.